Consider the following 353-residue polypeptide: Beta-hexosaminidase (353 aa).

Substrate contacts are provided by residues aspartate 74, arginine 82, arginine 149, and lysine 179–histidine 180. Residue histidine 192 is the Proton donor/acceptor of the active site. Catalysis depends on aspartate 263, which acts as the Nucleophile.

This sequence belongs to the glycosyl hydrolase 3 family. NagZ subfamily.

It is found in the cytoplasm. The enzyme catalyses Hydrolysis of terminal non-reducing N-acetyl-D-hexosamine residues in N-acetyl-beta-D-hexosaminides.. It functions in the pathway cell wall biogenesis; peptidoglycan recycling. Its function is as follows. Plays a role in peptidoglycan recycling by cleaving the terminal beta-1,4-linked N-acetylglucosamine (GlcNAc) from peptide-linked peptidoglycan fragments, giving rise to free GlcNAc, anhydro-N-acetylmuramic acid and anhydro-N-acetylmuramic acid-linked peptides. The protein is Beta-hexosaminidase of Bordetella bronchiseptica (strain ATCC BAA-588 / NCTC 13252 / RB50) (Alcaligenes bronchisepticus).